A 138-amino-acid polypeptide reads, in one-letter code: Translation initiation factor 2 subunit beta (138 aa).

This sequence belongs to the eIF-2-beta/eIF-5 family. In terms of assembly, heterotrimer composed of an alpha, a beta and a gamma chain.

Its function is as follows. eIF-2 functions in the early steps of protein synthesis by forming a ternary complex with GTP and initiator tRNA. The protein is Translation initiation factor 2 subunit beta of Methanopyrus kandleri (strain AV19 / DSM 6324 / JCM 9639 / NBRC 100938).